The following is a 549-amino-acid chain: Cation/acetate symporter ActP (549 aa).

A run of 13 helical transmembrane segments spans residues 33 to 53, 77 to 97, 103 to 123, 148 to 168, 183 to 203, 206 to 226, 262 to 282, 303 to 323, 355 to 375, 404 to 424, 428 to 448, 464 to 484, and 493 to 513; these read WQAIVMFLIFVVFTLGITYWA, LAIAGDYMSAASFLGISALVF, GLIYSLGFLVGWPIILFLIAE, ILSACGSLVVVALYLIAQMVG, IAVVLVGVLMMMYVLFGGMLA, WVQIIKAVLLLFGASFMAFMV, ISALSLGLGLMFGTAGLPHIL, GFMGYFYILTFIIGFGAIMLV, LFLGFISAVAFATILAVVAGL, VSKITVLVLGVIAIILGVLFE, IAFMVGLAFAIAASCNFPIIL, GGWLGLVTAVVLMVLGPTIWV, and IFPYEYPALFSISVAFIGIWF.

It belongs to the sodium:solute symporter (SSF) (TC 2.A.21) family.

It localises to the cell inner membrane. Functionally, transports acetate. This Citrobacter koseri (strain ATCC BAA-895 / CDC 4225-83 / SGSC4696) protein is Cation/acetate symporter ActP.